The primary structure comprises 66 residues: Scarabaecin (66 aa).

An N-terminal signal peptide occupies residues 1-26 (MKTLTFYTLLLCAALYSNFFDCKAVA). C46 and C57 are oxidised to a cystine.

It is found in the secreted. Its function is as follows. Possesses antifungal activity against phytopathogenic fungi such as P.oryzae, R.solani and B.cinerea but not against phytopathogenic bacteria. Shows weak activity against the insect pathogenic fungus B.bassiana and against S.aureus. Binds chitin. This Oryctes rhinoceros (Coconut rhinoceros beetle) protein is Scarabaecin.